Consider the following 171-residue polypeptide: ATP synthase subunit b (171 aa).

A helical transmembrane segment spans residues 3-23; that stretch reads KFLFFIFVFVGISFAGDDTAT.

This sequence belongs to the ATPase B chain family. As to quaternary structure, F-type ATPases have 2 components, F(1) - the catalytic core - and F(0) - the membrane proton channel. F(1) has five subunits: alpha(3), beta(3), gamma(1), delta(1), epsilon(1). F(0) has three main subunits: a(1), b(2) and c(10-14). The alpha and beta chains form an alternating ring which encloses part of the gamma chain. F(1) is attached to F(0) by a central stalk formed by the gamma and epsilon chains, while a peripheral stalk is formed by the delta and b chains.

The protein localises to the cell inner membrane. Its function is as follows. F(1)F(0) ATP synthase produces ATP from ADP in the presence of a proton or sodium gradient. F-type ATPases consist of two structural domains, F(1) containing the extramembraneous catalytic core and F(0) containing the membrane proton channel, linked together by a central stalk and a peripheral stalk. During catalysis, ATP synthesis in the catalytic domain of F(1) is coupled via a rotary mechanism of the central stalk subunits to proton translocation. Component of the F(0) channel, it forms part of the peripheral stalk, linking F(1) to F(0). This is ATP synthase subunit b from Campylobacter hominis (strain ATCC BAA-381 / DSM 21671 / CCUG 45161 / LMG 19568 / NCTC 13146 / CH001A).